The sequence spans 256 residues: Putative ankyrin repeat protein FPV231 (256 aa).

5 ANK repeats span residues 1–20 (MFGNTTISKMLLDYGARIDS), 24–53 (EECLPLNHAIATNNKELTSLFLARGADTNI), 57–86 (YNRSVLHKAIGNNNITSVKLLLNHGIDYNL), 90–119 (HGYTALHYAITLQNREITDMLLSSGADPNI), and 123–151 (EKHTPLYHALLYRSSNVESLILHGADINI).

The polypeptide is Putative ankyrin repeat protein FPV231 (Vertebrata (FPV)).